Consider the following 983-residue polypeptide: Protein translocase subunit SecA (983 aa).

Residues glutamine 83, 101-105 (GEGKT), and aspartate 489 contribute to the ATP site. Positions 948 to 983 (ISSEEEDNNEKTNINNNEDLERTKGEAQQTAKNPNE) are disordered. Residues 973–983 (EAQQTAKNPNE) are compositionally biased toward polar residues.

It belongs to the SecA family. Monomer and homodimer. Part of the essential Sec protein translocation apparatus which comprises SecA, SecYEG and auxiliary proteins SecDF. Other proteins may also be involved.

It is found in the cell membrane. Its subcellular location is the cytoplasm. It carries out the reaction ATP + H2O + cellular proteinSide 1 = ADP + phosphate + cellular proteinSide 2.. In terms of biological role, part of the Sec protein translocase complex. Interacts with the SecYEG preprotein conducting channel. Has a central role in coupling the hydrolysis of ATP to the transfer of proteins into and across the cell membrane, serving as an ATP-driven molecular motor driving the stepwise translocation of polypeptide chains across the membrane. This Mesomycoplasma hyopneumoniae (strain J / ATCC 25934 / NCTC 10110) (Mycoplasma hyopneumoniae) protein is Protein translocase subunit SecA.